The sequence spans 746 residues: Exostosin-1 (746 aa).

The Cytoplasmic segment spans residues 1–7; that stretch reads MQAKKRY. Residues 8 to 28 traverse the membrane as a helical; Signal-anchor for type II membrane protein segment; it reads FILLSAGSCLALLFYFGGLQF. At 29–746 the chain is on the lumenal side; that stretch reads RASRSHSRRE…RKKYRDIERL (718 aa). Residue asparagine 89 is glycosylated (N-linked (GlcNAc...) asparagine). Disulfide bonds link cysteine 98–cysteine 103 and cysteine 109–cysteine 152. A protein is bound by residues leucine 166 and tyrosine 203. UDP-binding residues include lysine 267, lysine 269, tyrosine 271, and arginine 280. Cysteine 298 and cysteine 312 are joined by a disulfide. Histidine 300 contacts a protein. Residues tyrosine 319 and tyrosine 324 each coordinate UDP. Asparagine 330 carries an N-linked (GlcNAc...) asparagine glycan. 2 disulfide bridges follow: cysteine 334–cysteine 355 and cysteine 652–cysteine 704. UDP-binding residues include arginine 346 and glutamate 349.

Belongs to the glycosyltransferase 47 family. In terms of assembly, part of the heparan sulfate polymerase, a dimeric complex composed of EXT1 and EXT2. Could also form homooligomeric complexes. Interacts with NDST1. Post-translationally, N-glycosylated.

It localises to the golgi apparatus membrane. Its subcellular location is the golgi apparatus. The protein localises to the cis-Golgi network membrane. It is found in the endoplasmic reticulum membrane. The catalysed reaction is 3-O-{alpha-D-GlcNAc-[(1-&gt;4)-beta-D-GlcA-(1-&gt;4)-alpha-D-GlcNAc](n)-(1-&gt;4)-beta-D-GlcA-(1-&gt;3)-beta-D-Gal-(1-&gt;3)-beta-D-Gal-(1-&gt;4)-beta-D-Xyl}-L-seryl-[protein] + UDP-alpha-D-glucuronate = 3-O-{[(1-&gt;4)-beta-D-GlcA-(1-&gt;4)-alpha-D-GlcNAc](n+1)-(1-&gt;4)-beta-D-GlcA-(1-&gt;3)-beta-D-Gal-(1-&gt;3)-beta-D-Gal-(1-&gt;4)-beta-D-Xyl}-L-seryl-[protein] + UDP + H(+). The protein operates within protein modification; protein glycosylation. Its function is as follows. Glycosyltransferase forming with EXT2 the heterodimeric heparan sulfate polymerase which catalyzes the elongation of the heparan sulfate glycan backbone. Glycan backbone extension consists in the alternating transfer of (1-&gt;4)-beta-D-GlcA and (1-&gt;4)-alpha-D-GlcNAc residues from their respective UDP-sugar donors. Both EXT1 and EXT2 are required for the full activity of the polymerase since EXT1 bears the N-acetylglucosaminyl-proteoglycan 4-beta-glucuronosyltransferase activity within the complex while EXT2 carries the glucuronosyl-N-acetylglucosaminyl-proteoglycan 4-alpha-N-acetylglucosaminyltransferase activity. Heparan sulfate proteoglycans are ubiquitous components of the extracellular matrix and play an important role in tissue homeostasis and signaling. This chain is Exostosin-1 (EXT1), found in Bos taurus (Bovine).